The chain runs to 462 residues: Cathepsin F (462 aa).

Positions 1–19 (MAPLLQLLWLLTLLSTVAL) are cleaved as a signal peptide. Positions 20–248 (SPVPAKPWAD…MSPAKSINDL (229 aa)) are cleaved as a propeptide — activation peptide. Residues Asn-35, Asn-138, and Asn-173 are each glycosylated (N-linked (GlcNAc...) asparagine). 2 cysteine pairs are disulfide-bonded: Cys-270/Cys-311 and Cys-304/Cys-344. The active site involves Cys-273. N-linked (GlcNAc...) asparagine glycans are attached at residues Asn-345 and Asn-356. Cys-402 and Cys-450 are oxidised to a cystine. His-409 is an active-site residue. An N-linked (GlcNAc...) asparagine glycan is attached at Asn-418. Asn-429 is an active-site residue.

It belongs to the peptidase C1 family.

Its subcellular location is the lysosome. It catalyses the reaction The recombinant enzyme cleaves synthetic substrates with Phe and Leu (better than Val) in P2, with high specificity constant (kcat/Km) comparable to that of cathepsin L.. Thiol protease which is believed to participate in intracellular degradation and turnover of proteins. Has also been implicated in tumor invasion and metastasis. The chain is Cathepsin F (Ctsf) from Mus musculus (Mouse).